The chain runs to 928 residues: TBC1 domain family member 2A (928 aa).

Met1 is subject to N-acetylmethionine. The segment covering Met1 to Glu19 has biased composition (low complexity). The interval Met1–Arg39 is disordered. The tract at residues Met1–Glu169 is interaction with CADH1. The PH domain maps to Pro45 to Trp142. A disordered region spans residues Asn225 to Ser275. Residues Ser295–Pro433 are interaction with RAC1. The stretch at Ile298–Gln416 forms a coiled coil. The residue at position 436 (Ser436) is a Phosphoserine. Residues Gly625–Gly817 form the Rab-GAP TBC domain. Positions Met875–Ala913 form a coiled coil. Residues Ser915 and Ser920 each carry the phosphoserine modification.

As to quaternary structure, interacts with activated RAC1 and CDH1. Expressed in a broad range of tissues, especially in kidney, liver, lung and placenta. Also expressed in keratinocytes and epithelia-containing organs. Isoform 2 is differentially expressed in prostate normal and cancer cells (at protein level).

The protein localises to the cytoplasm. It is found in the cytoplasmic vesicle. It localises to the cell junction. Its function is as follows. Acts as a GTPase-activating protein for RAB7A. Signal effector acting as a linker between RAC1 and RAB7A, leading to RAB7A inactivation and subsequent inhibition of cadherin degradation and reduced cell-cell adhesion. The polypeptide is TBC1 domain family member 2A (TBC1D2) (Homo sapiens (Human)).